The primary structure comprises 620 residues: Chaperone protein HscA homolog (620 aa).

It belongs to the heat shock protein 70 family.

Its function is as follows. Chaperone involved in the maturation of iron-sulfur cluster-containing proteins. Has a low intrinsic ATPase activity which is markedly stimulated by HscB. This is Chaperone protein HscA homolog from Shewanella sp. (strain MR-4).